The following is a 166-amino-acid chain: Myosin regulatory light chain 2, ventricular/cardiac muscle isoform (166 aa).

At Ser-2 the chain carries N,N,N-trimethylserine. Residue Asn-14 is modified to Deamidated asparagine. Ser-19 is subject to Phosphoserine. 3 EF-hand domains span residues Thr-24–Val-59, Asp-94–Arg-129, and Phe-130–Lys-165. Ca(2+) is bound by residues Asp-37, Asn-39, Asp-41, and Asp-48. At Thr-52 the chain carries Phosphothreonine.

In terms of assembly, myosin is a hexamer of 2 heavy chains and 4 light chains. Interacts with MYOC. N-terminus is methylated by METTL11A/NTM1. In terms of processing, phosphorylated by MYLK3 and MYLK2; promotes cardiac muscle contraction and function. Dephosphorylated by PPP1CB complexed to PPP1R12B. The phosphorylated form in adult is expressed as gradients across the heart from endocardium (low phosphorylation) to epicardium (high phosphorylation); regulates cardiac torsion and workload distribution.

It localises to the cytoplasm. It is found in the myofibril. The protein localises to the sarcomere. The protein resides in the a band. Its function is as follows. Contractile protein that plays a role in heart development and function. Following phosphorylation, plays a role in cross-bridge cycling kinetics and cardiac muscle contraction by increasing myosin lever arm stiffness and promoting myosin head diffusion; as a consequence of the increase in maximum contraction force and calcium sensitivity of contraction force. These events altogether slow down myosin kinetics and prolong duty cycle resulting in accumulated myosins being cooperatively recruited to actin binding sites to sustain thin filament activation as a means to fine-tune myofilament calcium sensitivity to force. During cardiogenesis plays an early role in cardiac contractility by promoting cardiac myofibril assembly. This chain is Myosin regulatory light chain 2, ventricular/cardiac muscle isoform, found in Bos taurus (Bovine).